The sequence spans 397 residues: Cathepsin E-B (397 aa).

Residues 1-16 (MRQILVLLLFVTLVYG) form the signal peptide. Positions 17 to 49 (LIRVPLKRQKSIRKTPKEKGKLSHVWTQQGIDM) are cleaved as a propeptide — activation peptide. The Peptidase A1 domain occupies 74-385 (YFGEISIGTP…DRGNNRVGLA (312 aa)). N-linked (GlcNAc...) asparagine glycosylation occurs at Asn86. Asp92 is an active-site residue. Cys105 and Cys110 are disulfide-bonded. The N-linked (GlcNAc...) asparagine glycan is linked to Asn130. A disulfide bridge links Cys268 with Cys272. Residue Asp277 is part of the active site. Cys310 and Cys344 are disulfide-bonded.

It belongs to the peptidase A1 family. In terms of assembly, homodimer; disulfide-linked. In terms of processing, glycosylated. Contains high mannose-type oligosaccharide. As to expression, expressed predominantly in the anterior and posterior adult stomach and at much lower levels in the larval foregut.

Its subcellular location is the endosome. It catalyses the reaction Similar to cathepsin D, but slightly broader specificity.. In terms of biological role, may have a role in immune function. Probably involved in the processing of antigenic peptides during MHC class II-mediated antigen presentation. The protein is Cathepsin E-B (ctse-b) of Xenopus laevis (African clawed frog).